The following is a 290-amino-acid chain: 33 kDa chaperonin (290 aa).

2 disulfide bridges follow: Cys-235-Cys-237 and Cys-268-Cys-271.

Belongs to the HSP33 family. In terms of processing, under oxidizing conditions two disulfide bonds are formed involving the reactive cysteines. Under reducing conditions zinc is bound to the reactive cysteines and the protein is inactive.

Its subcellular location is the cytoplasm. Functionally, redox regulated molecular chaperone. Protects both thermally unfolding and oxidatively damaged proteins from irreversible aggregation. Plays an important role in the bacterial defense system toward oxidative stress. This chain is 33 kDa chaperonin, found in Streptococcus pyogenes serotype M6 (strain ATCC BAA-946 / MGAS10394).